Here is a 365-residue protein sequence, read N- to C-terminus: Serine protease 40 (365 aa).

Positions Met1–Thr34 are cleaved as a signal peptide. Asn44 carries an N-linked (GlcNAc...) asparagine glycan. The Peptidase S1 domain occupies Ile69–Lys313. Cysteines 94 and 110 form a disulfide. Active-site charge relay system residues include His109 and Asp159. 3 cysteine pairs are disulfide-bonded: Cys193-Cys270, Cys226-Cys249, and Cys260-Cys288. The active-site Charge relay system is the Ser264. A disordered region spans residues Lys312–Gly343.

This sequence belongs to the peptidase S1 family. Expressed in testis. More specifically, abundantly expressed in the haploid round spermatid.

It localises to the cytoplasmic vesicle. The protein localises to the secretory vesicle. Its subcellular location is the acrosome. The protein resides in the secreted. In terms of biological role, may play an important role in the sperm/egg interaction; released during the acrosome reaction. The sequence is that of Serine protease 40 (Prss40) from Mus musculus (Mouse).